Consider the following 187-residue polypeptide: Ribosome-recycling factor (187 aa).

The protein belongs to the RRF family.

The protein localises to the cytoplasm. Responsible for the release of ribosomes from messenger RNA at the termination of protein biosynthesis. May increase the efficiency of translation by recycling ribosomes from one round of translation to another. This chain is Ribosome-recycling factor, found in Rhodopseudomonas palustris (strain BisB18).